The primary structure comprises 387 residues: Succinate--CoA ligase [ADP-forming] subunit beta (387 aa).

One can recognise an ATP-grasp domain in the interval 9–244 (KQLFAEYGIP…KTQEDETEVL (236 aa)). Residues Lys46, 53 to 55 (GRG), Gly102, and Glu107 each bind ATP. Residues Asn199 and Asp213 each coordinate Mg(2+). Substrate contacts are provided by residues Asn264 and 321-323 (GIV).

This sequence belongs to the succinate/malate CoA ligase beta subunit family. As to quaternary structure, heterotetramer of two alpha and two beta subunits. It depends on Mg(2+) as a cofactor.

The catalysed reaction is succinate + ATP + CoA = succinyl-CoA + ADP + phosphate. It catalyses the reaction GTP + succinate + CoA = succinyl-CoA + GDP + phosphate. The protein operates within carbohydrate metabolism; tricarboxylic acid cycle; succinate from succinyl-CoA (ligase route): step 1/1. Succinyl-CoA synthetase functions in the citric acid cycle (TCA), coupling the hydrolysis of succinyl-CoA to the synthesis of either ATP or GTP and thus represents the only step of substrate-level phosphorylation in the TCA. The beta subunit provides nucleotide specificity of the enzyme and binds the substrate succinate, while the binding sites for coenzyme A and phosphate are found in the alpha subunit. This Xylella fastidiosa (strain M23) protein is Succinate--CoA ligase [ADP-forming] subunit beta.